The following is a 393-amino-acid chain: Methylthioribose kinase (393 aa).

ATP is bound by residues asparagine 38, lysine 53, and 107–109; that span reads EDL. Residue aspartate 225 participates in substrate binding. 242 to 244 serves as a coordination point for ATP; the sequence is DPE. Arginine 332 lines the substrate pocket.

Belongs to the methylthioribose kinase family. As to quaternary structure, homodimer.

The catalysed reaction is 5-(methylsulfanyl)-D-ribose + ATP = 5-(methylsulfanyl)-alpha-D-ribose 1-phosphate + ADP + H(+). Its pathway is amino-acid biosynthesis; L-methionine biosynthesis via salvage pathway; S-methyl-5-thio-alpha-D-ribose 1-phosphate from S-methyl-5'-thioadenosine (hydrolase route): step 2/2. Its function is as follows. Catalyzes the phosphorylation of methylthioribose into methylthioribose-1-phosphate. The protein is Methylthioribose kinase of Bacillus cereus (strain AH820).